The following is a 259-amino-acid chain: Phospholipase YtpA (259 aa).

The active-site Nucleophile is serine 88. Residues aspartate 206 and histidine 236 each act as charge relay system in the active site.

It belongs to the AB hydrolase superfamily.

The protein operates within antibiotic biosynthesis; bacilysocin biosynthesis. Its function is as follows. Phospholipase involved in the biosynthesis of the antibiotic bacilysocin. It probably catalyzes the hydrolysis of the 2-sn-acyl moiety of phosphatidylglycerol to produce bacilysocin (lysophosphatidylglycerol). Is also able to catalyze the hydrolysis reaction of one acyl bond in phosphatidylcholine in vitro (actual cleavage point is unknown), resulting in lysophosphatidylcholine. The sequence is that of Phospholipase YtpA (ytpA) from Bacillus subtilis (strain 168).